Reading from the N-terminus, the 175-residue chain is General odorant-binding protein 84a (175 aa).

Positions 1-24 (MYSALVRACAVIAFLILSPNCARA) are cleaved as a signal peptide. 2 cysteine pairs are disulfide-bonded: Cys-103–Cys-151 and Cys-140–Cys-160.

As to expression, present only in a small number of hairs scattered over the surface of the funiculus.

Its subcellular location is the secreted. This Drosophila melanogaster (Fruit fly) protein is General odorant-binding protein 84a (Obp84a).